The chain runs to 75 residues: MRLVVCLVFLASFALVCQGQGYKGPYTRPILRPYVRPVVSYNVCTLSCRGITTTQARSCCTRLGRCCHVAKGYSG.

An N-terminal signal peptide occupies residues methionine 1–glycine 19. A Pyrrolidone carboxylic acid modification is found at glutamine 20. Disulfide bonds link cysteine 44–cysteine 59, cysteine 48–cysteine 66, and cysteine 60–cysteine 67. At serine 74 the chain carries Serine amide.

The protein belongs to the penaeidin family.

It is found in the cytoplasmic granule. Its function is as follows. Antibacterial and antifungal activity. Presents chitin-binding activity. This chain is Penaeidin-3l, found in Penaeus setiferus (Atlantic white shrimp).